Here is a 203-residue protein sequence, read N- to C-terminus: Nascent polypeptide-associated complex subunit alpha-like protein 1 (203 aa).

Basic and acidic residues predominate over residues 1–23 (MTTEEKEILAAKLEEQKIDLDKP). The interval 1-71 (MTTEEKEILA…SEKKSRKAML (71 aa)) is disordered. Residues 24–50 (EVEDDDDNEDDDSDDDDKDDDEADGLD) show a composition bias toward acidic residues. Phosphoserine is present on Ser36. One can recognise an NAC-A/B domain in the interval 60 to 125 (SRSEKKSRKA…AKIEDLSSQI (66 aa)). The UBA domain occupies 158 to 203 (EVDEEGVEPKDIELVMTQAGVSRPNAVKALKAADGDIVSAIMELTT).

This sequence belongs to the NAC-alpha family.

May promote appropriate targeting of ribosome-nascent polypeptide complexes. This Arabidopsis thaliana (Mouse-ear cress) protein is Nascent polypeptide-associated complex subunit alpha-like protein 1.